Consider the following 182-residue polypeptide: Translation initiation factor IF-3 (182 aa).

Residues 1 to 22 (MPLGDCNISTPDNKQNRKNQEI) form a disordered region.

It belongs to the IF-3 family. As to quaternary structure, monomer.

Its subcellular location is the cytoplasm. In terms of biological role, IF-3 binds to the 30S ribosomal subunit and shifts the equilibrium between 70S ribosomes and their 50S and 30S subunits in favor of the free subunits, thus enhancing the availability of 30S subunits on which protein synthesis initiation begins. In Xanthomonas campestris pv. campestris (strain ATCC 33913 / DSM 3586 / NCPPB 528 / LMG 568 / P 25), this protein is Translation initiation factor IF-3.